We begin with the raw amino-acid sequence, 266 residues long: Tryptophan synthase alpha chain (266 aa).

Catalysis depends on proton acceptor residues Glu-51 and Asp-62.

This sequence belongs to the TrpA family. Tetramer of two alpha and two beta chains.

The catalysed reaction is (1S,2R)-1-C-(indol-3-yl)glycerol 3-phosphate + L-serine = D-glyceraldehyde 3-phosphate + L-tryptophan + H2O. It participates in amino-acid biosynthesis; L-tryptophan biosynthesis; L-tryptophan from chorismate: step 5/5. Functionally, the alpha subunit is responsible for the aldol cleavage of indoleglycerol phosphate to indole and glyceraldehyde 3-phosphate. The sequence is that of Tryptophan synthase alpha chain from Prochlorococcus marinus (strain NATL1A).